The following is a 771-amino-acid chain: Probable aconitate hydratase, mitochondrial (771 aa).

Substrate contacts are provided by residues glutamine 86 and 179–181 (DSH). [4Fe-4S] cluster contacts are provided by cysteine 372, cysteine 435, and cysteine 438. Substrate is bound by residues arginine 461, arginine 466, arginine 594, and 657–658 (SR).

It belongs to the aconitase/IPM isomerase family. As to quaternary structure, monomer. Requires [4Fe-4S] cluster as cofactor.

It is found in the mitochondrion. It carries out the reaction citrate = D-threo-isocitrate. It participates in carbohydrate metabolism; tricarboxylic acid cycle; isocitrate from oxaloacetate: step 2/2. Its function is as follows. Catalyzes the isomerization of citrate to isocitrate via cis-aconitate. This is Probable aconitate hydratase, mitochondrial (aco2) from Dictyostelium discoideum (Social amoeba).